We begin with the raw amino-acid sequence, 731 residues long: Dynein axonemal intermediate chain 7 (731 aa).

Disordered regions lie at residues 1–50 (MPPK…NERL) and 285–320 (QNTE…VRSE). Composition is skewed to basic and acidic residues over residues 17–50 (KAEK…NERL) and 296–320 (GKME…VRSE).

The protein belongs to the DNAI7 family. As to quaternary structure, part of the multisubunit axonemal dynein complex formed at least of two heavy chains and a number of intermediate and light chains.

The protein resides in the cell projection. Its subcellular location is the cilium. It localises to the cytoplasm. Functionally, via its association with the multisubunit axonemal dynein complex, may be potentially involved in the regulation of cilia function. This is Dynein axonemal intermediate chain 7 (dnai7) from Danio rerio (Zebrafish).